A 126-amino-acid chain; its full sequence is Large ribosomal subunit protein bL20c (126 aa).

This sequence belongs to the bacterial ribosomal protein bL20 family.

The protein resides in the plastid. Its subcellular location is the chloroplast. Binds directly to 23S ribosomal RNA and is necessary for the in vitro assembly process of the 50S ribosomal subunit. It is not involved in the protein synthesizing functions of that subunit. This is Large ribosomal subunit protein bL20c from Illicium oligandrum (Star anise).